Reading from the N-terminus, the 510-residue chain is tRNA-2-methylthio-N(6)-dimethylallyladenosine synthase (510 aa).

One can recognise an MTTase N-terminal domain in the interval 19-135 (RTFEVRTYGC…LPALLDRARH (117 aa)). Positions 28, 64, 98, 172, 176, and 179 each coordinate [4Fe-4S] cluster. Positions 158-394 (RESSYAAWVS…IELQERISLE (237 aa)) constitute a Radical SAM core domain. In terms of domain architecture, TRAM spans 397–467 (TAQIGRRVEL…PHHLIADAGL (71 aa)). Positions 477-510 (DAHAAGQKPRTGVGLGMPAVGAPDPLPATTGCAR) are disordered.

This sequence belongs to the methylthiotransferase family. MiaB subfamily. As to quaternary structure, monomer. The cofactor is [4Fe-4S] cluster.

Its subcellular location is the cytoplasm. It carries out the reaction N(6)-dimethylallyladenosine(37) in tRNA + (sulfur carrier)-SH + AH2 + 2 S-adenosyl-L-methionine = 2-methylsulfanyl-N(6)-dimethylallyladenosine(37) in tRNA + (sulfur carrier)-H + 5'-deoxyadenosine + L-methionine + A + S-adenosyl-L-homocysteine + 2 H(+). Its function is as follows. Catalyzes the methylthiolation of N6-(dimethylallyl)adenosine (i(6)A), leading to the formation of 2-methylthio-N6-(dimethylallyl)adenosine (ms(2)i(6)A) at position 37 in tRNAs that read codons beginning with uridine. The chain is tRNA-2-methylthio-N(6)-dimethylallyladenosine synthase from Mycolicibacterium vanbaalenii (strain DSM 7251 / JCM 13017 / BCRC 16820 / KCTC 9966 / NRRL B-24157 / PYR-1) (Mycobacterium vanbaalenii).